The sequence spans 155 residues: Small ribosomal subunit protein uS7cz/uS7cy (155 aa).

Belongs to the universal ribosomal protein uS7 family. In terms of assembly, part of the 30S ribosomal subunit.

Its subcellular location is the plastid. The protein localises to the chloroplast. One of the primary rRNA binding proteins, it binds directly to 16S rRNA where it nucleates assembly of the head domain of the 30S subunit. The chain is Small ribosomal subunit protein uS7cz/uS7cy (rps7-A) from Drimys granadensis.